The chain runs to 290 residues: UPF0761 membrane protein YihY (290 aa).

Transmembrane regions (helical) follow at residues 44–64 (LLSL…FPMF), 104–124 (VGAC…DSAL), 140–160 (FAVY…SLAI), 183–203 (VLPL…VPTT), 210–230 (AIVG…GFAL), and 244–264 (VLAV…IVLL).

Belongs to the UPF0761 family.

Its subcellular location is the cell inner membrane. The polypeptide is UPF0761 membrane protein YihY (Salmonella arizonae (strain ATCC BAA-731 / CDC346-86 / RSK2980)).